Here is a 336-residue protein sequence, read N- to C-terminus: Nucleoid-associated protein ECA2747 (336 aa).

The interval 317 to 336 (KGTPPNLRDQLQRRTSGGKQ) is disordered.

This sequence belongs to the YejK family.

Its subcellular location is the cytoplasm. The protein resides in the nucleoid. This is Nucleoid-associated protein ECA2747 from Pectobacterium atrosepticum (strain SCRI 1043 / ATCC BAA-672) (Erwinia carotovora subsp. atroseptica).